Reading from the N-terminus, the 410-residue chain is MKNEIIERFTKYVQVDTQSDPNSDTCPSTPGQWTLAKMLVEELKAIGMEEVTIDENGYIMATLPANTDKDVPTIGFLAHMDTAPEFTGANVKPQIVENYDGNDIILNEALHIVLSPKDFPELANYKGHTLITTDGTTLLGADNKAGIAEIMTAMAYLIQHPEIKHGKVRVAFTPDEEIGRGPHKFDVAKFGAKYAYTVDGGPLGELEYESFNAAEAKIKFKGKNVHPGTAKGKMINSMKIAMEFHAQLPANEAPEHTEGYEGFYHLLSFQGNVEETALHYIIRDFDREQFEARKAKMREIAAKLQEKYGKERIAIEIKDQYYNMREKIEPVREVVDIAYEAMKNLNIEPKISPIRGGTDGSQLSYMGLPTPNIFTGGENFHGRYEYISVDNMIKATNVIIEIIKLFEQKA.

His79 serves as a coordination point for Zn(2+). The active site involves Asp81. Asp142 lines the Zn(2+) pocket. The active-site Proton acceptor is Glu176. Positions 177, 199, and 381 each coordinate Zn(2+).

This sequence belongs to the peptidase M20B family. It depends on Zn(2+) as a cofactor.

It localises to the cytoplasm. The catalysed reaction is Release of the N-terminal residue from a tripeptide.. Its function is as follows. Cleaves the N-terminal amino acid of tripeptides. This is Peptidase T from Geobacillus sp. (strain WCH70).